A 380-amino-acid chain; its full sequence is Cytochrome b (380 aa).

4 helical membrane passes run 34–54 (FGSL…LLAM), 78–99 (WLIR…FLHI), 114–134 (WNTG…GYVL), and 179–199 (FFAL…VHLT). Positions 84 and 98 each coordinate heme b. Heme b contacts are provided by His-183 and His-197. Residue His-202 coordinates a ubiquinone. 4 helical membrane passes run 227–247 (LKDI…ALFS), 289–309 (LGGV…PFLH), 321–341 (LSQT…WIGS), and 348–368 (FMII…ILFP).

It belongs to the cytochrome b family. In terms of assembly, the cytochrome bc1 complex contains 11 subunits: 3 respiratory subunits (MT-CYB, CYC1 and UQCRFS1), 2 core proteins (UQCRC1 and UQCRC2) and 6 low-molecular weight proteins (UQCRH/QCR6, UQCRB/QCR7, UQCRQ/QCR8, UQCR10/QCR9, UQCR11/QCR10 and a cleavage product of UQCRFS1). This cytochrome bc1 complex then forms a dimer. Heme b is required as a cofactor.

Its subcellular location is the mitochondrion inner membrane. Component of the ubiquinol-cytochrome c reductase complex (complex III or cytochrome b-c1 complex) that is part of the mitochondrial respiratory chain. The b-c1 complex mediates electron transfer from ubiquinol to cytochrome c. Contributes to the generation of a proton gradient across the mitochondrial membrane that is then used for ATP synthesis. This chain is Cytochrome b (MT-CYB), found in Gallus lafayettii (Sri Lanka junglefowl).